The primary structure comprises 150 residues: Centrin-B (150 aa).

EF-hand domains follow at residues 12-46, 80-114, and 115-150; these read DQIS…LGCE, DSMS…IGEE, and CSDS…KKVL. Positions 128, 130, 132, and 139 each coordinate Ca(2+).

This sequence belongs to the centrin family.

It is found in the cytoplasm. Its subcellular location is the cytoskeleton. The protein localises to the microtubule organizing center. The protein resides in the centrosome. Its function is as follows. Plays a fundamental role in microtubule-organizing center structure and function. The sequence is that of Centrin-B (cenB) from Dictyostelium discoideum (Social amoeba).